A 445-amino-acid chain; its full sequence is 23S rRNA (uracil(1939)-C(5))-methyltransferase RlmD (445 aa).

The tract at residues 1–21 is disordered; the sequence is MARRRKQLPETPEPASIETLS. The 60-residue stretch at 5–64 folds into the TRAM domain; the sequence is RKQLPETPEPASIETLSHDGRGIARRDGKTTFIDNALPGEEVMFKFTYMRRKFDEGKAVE. 4 residues coordinate [4Fe-4S] cluster: Cys-77, Cys-83, Cys-86, and Cys-165. Positions 275, 304, 309, 325, 352, and 373 each coordinate S-adenosyl-L-methionine. The active-site Nucleophile is the Cys-399.

It belongs to the class I-like SAM-binding methyltransferase superfamily. RNA M5U methyltransferase family. RlmD subfamily.

It carries out the reaction uridine(1939) in 23S rRNA + S-adenosyl-L-methionine = 5-methyluridine(1939) in 23S rRNA + S-adenosyl-L-homocysteine + H(+). Catalyzes the formation of 5-methyl-uridine at position 1939 (m5U1939) in 23S rRNA. This is 23S rRNA (uracil(1939)-C(5))-methyltransferase RlmD from Alcanivorax borkumensis (strain ATCC 700651 / DSM 11573 / NCIMB 13689 / SK2).